The primary structure comprises 579 residues: MISESQGGLMSAFTTPPKFSGFIRRLVEEGYVNAQNMQQALEKAKKFKQDIVPYLIDNFSISPLTIAEIISLEFGEPLLDLGVFDPALFLKDKIDEKLIQKYRIMPLVHRGHVLYVATSNPTNIEAMDAIRFNSKLKVEPIIVEHDKLERLLSEHFVEETHFNFDTEELDLDVEVDPHTTDDDDEDDKLKDEAPIVKYINKLLIDAIRMSASDLHFEPYEKSYRVRYRVDGVLRLIATPPLQLATRLASRLKVMSQMDISEKRVPQDGRIKLKMSKSKTIDFRVNSLPTLFGEKIVLRILDPASAMLGIDALGYEPEQKALFMEALNKPQGMLLITGPTGSGKTVSLYTGLNILNTEHANISTAEDPVEINLEGVNQVNVNPKVGLTFAAALRSFLRQDPDIIMVGEIRDLETAEIAIKAAQTGHLVMSTLHTNNAAETLTRLRNMGVASFNIATSVNLVIAQRLARRLCSQCKRPIQVPERSLLEMGFTPEDLAQPEFQIFEPVGCHDCREGYKGRVGIYEVMKITPEISKIIMEDGNALEIAATAETLGFNNLRRSGLKKVMQGVTSLQEINRVTSE.

340–345 (GSGKTV) serves as a coordination point for ATP. Residues Cys-470, Cys-473, Cys-507, and Cys-510 each contribute to the Zn(2+) site.

This sequence belongs to the GSP E family. Interacts with CpiA.

The protein resides in the cytoplasm. With respect to regulation, inhibited by the inhibitory protein CpiA. In terms of biological role, ATPase component of the type IV pilus (T4P). Acts as a molecular motor to provide the energy that is required for biogenesis of the pilus and the extrusion of substrates generated in the cytoplasm. PilB is required for optimal T4P extension and, consequently, efficient natural transformation. May promote processive T4P extension. The chain is Type IV pilus assembly ATPase PilB from Acinetobacter baylyi (strain ATCC 33305 / BD413 / ADP1).